A 367-amino-acid chain; its full sequence is UDP-N-acetylenolpyruvoylglucosamine reductase 2 (367 aa).

Residues 31–198 form the FAD-binding PCMH-type domain; that stretch reads IGGKPRSAVR…LAIELQLLTD (168 aa). The active site involves Arg176. The active-site Proton donor is Ser256. Glu357 is a catalytic residue.

The protein belongs to the MurB family. The cofactor is FAD.

It localises to the cytoplasm. The enzyme catalyses UDP-N-acetyl-alpha-D-muramate + NADP(+) = UDP-N-acetyl-3-O-(1-carboxyvinyl)-alpha-D-glucosamine + NADPH + H(+). Its pathway is cell wall biogenesis; peptidoglycan biosynthesis. In terms of biological role, cell wall formation. The protein is UDP-N-acetylenolpyruvoylglucosamine reductase 2 (murB2) of Corynebacterium glutamicum (strain ATCC 13032 / DSM 20300 / JCM 1318 / BCRC 11384 / CCUG 27702 / LMG 3730 / NBRC 12168 / NCIMB 10025 / NRRL B-2784 / 534).